The sequence spans 81 residues: Photosystem I iron-sulfur center (81 aa).

4Fe-4S ferredoxin-type domains are found at residues 2–31 (SHAV…MVPW) and 39–68 (IASS…IRVY). Residues C11, C14, C17, C21, C48, C51, C54, and C58 each coordinate [4Fe-4S] cluster.

As to quaternary structure, the cyanobacterial PSI reaction center is composed of one copy each of PsaA,B,C,D,E,F,I,J,K,L,M and X, and forms trimeric complexes. [4Fe-4S] cluster is required as a cofactor.

It is found in the cellular thylakoid membrane. It catalyses the reaction reduced [plastocyanin] + hnu + oxidized [2Fe-2S]-[ferredoxin] = oxidized [plastocyanin] + reduced [2Fe-2S]-[ferredoxin]. Functionally, apoprotein for the two 4Fe-4S centers FA and FB of photosystem I (PSI); essential for photochemical activity. FB is the terminal electron acceptor of PSI, donating electrons to ferredoxin. The C-terminus interacts with PsaA/B/D and helps assemble the protein into the PSI complex. Required for binding of PsaD and PsaE to PSI. PSI is a plastocyanin/cytochrome c6-ferredoxin oxidoreductase, converting photonic excitation into a charge separation, which transfers an electron from the donor P700 chlorophyll pair to the spectroscopically characterized acceptors A0, A1, FX, FA and FB in turn. The protein is Photosystem I iron-sulfur center of Prochlorococcus marinus (strain MIT 9211).